The chain runs to 577 residues: Cell adhesion molecule CEACAM20 (577 aa).

The first 30 residues, 1–30 (MELAGFHCCSWTVILLSALLPTTWRPPAAA), serve as a signal peptide directing secretion. The Extracellular portion of the chain corresponds to 31–430 (HFIHRADLLS…LQSSSMSPGA (400 aa)). Ig-like C2-type domains are found at residues 48–137 (PLAK…ASLT), 142–223 (PDPV…TNLS), 239–324 (PNIE…LKLT), and 329–415 (PDQV…ASVL). Cysteine 72 and cysteine 120 form a disulfide bridge. N-linked (GlcNAc...) asparagine glycans are attached at residues asparagine 78 and asparagine 102. Disulfide bonds link cysteine 259–cysteine 307 and cysteine 358–cysteine 399. The N-linked (GlcNAc...) asparagine glycan is linked to asparagine 289. A helical membrane pass occupies residues 431–451 (IAGIVIGILVAIALAIGLGYF). The Cytoplasmic portion of the chain corresponds to 452-577 (LYSTKDRWTR…SLYCKITPSA (126 aa)). A disordered region spans residues 461–568 (RRRSASDTTS…YEKLLNSNHS (108 aa)). Residues 474-484 (IPPTSVMQSTP) show a composition bias toward polar residues. The segment covering 516–526 (DSPEQFYEKKP) has biased composition (basic and acidic residues). Residues 536 to 551 (KPLPQIPKQPLMPPGP) are compositionally biased toward pro residues. Residues tyrosine 559 and tyrosine 570 each carry the phosphotyrosine modification.

This sequence belongs to the immunoglobulin superfamily. CEA family. Interacts (via extracellular domain) with PTPRH (via extracellular domain); the interaction dephosphorylates CEACAM20. Interacts (phosphorylated form) with SYK (via SH2 domains); the interaction further enhances CEACAM20 phosphorylation. In terms of processing, phosphorylated on tyrosine residues by SYK, SRC and FYN in vitro. As to expression, strongly expressed in the small intestine and colon (at protein level). Minimal expression in other tissues (at protein level). Highly expressed in cecum, colon, ileum, jejunum, and testis, and also detected at lower levels in salivary gland and thymus.

It is found in the cell projection. The protein localises to the microvillus membrane. The protein resides in the apical cell membrane. Its function is as follows. Together with the tyrosine-protein kinase SYK, enhances production of the cytokine CXCL8/IL-8 via the NFKB pathway and may thus have a role in the intestinal immune response. This is Cell adhesion molecule CEACAM20 from Mus musculus (Mouse).